Here is a 357-residue protein sequence, read N- to C-terminus: Alanine racemase (357 aa).

Lysine 33 serves as the catalytic Proton acceptor; specific for D-alanine. Lysine 33 is modified (N6-(pyridoxal phosphate)lysine). Arginine 129 contributes to the substrate binding site. The Proton acceptor; specific for L-alanine role is filled by tyrosine 253. Methionine 301 is a binding site for substrate.

The protein belongs to the alanine racemase family. Requires pyridoxal 5'-phosphate as cofactor.

The catalysed reaction is L-alanine = D-alanine. It functions in the pathway amino-acid biosynthesis; D-alanine biosynthesis; D-alanine from L-alanine: step 1/1. In terms of biological role, catalyzes the interconversion of L-alanine and D-alanine. May also act on other amino acids. This is Alanine racemase (alr) from Pseudomonas fluorescens (strain ATCC BAA-477 / NRRL B-23932 / Pf-5).